The sequence spans 317 residues: Transaldolase 2 (317 aa).

Lysine 132 serves as the catalytic Schiff-base intermediate with substrate.

This sequence belongs to the transaldolase family. Type 1 subfamily. As to quaternary structure, homodimer.

Its subcellular location is the cytoplasm. It catalyses the reaction D-sedoheptulose 7-phosphate + D-glyceraldehyde 3-phosphate = D-erythrose 4-phosphate + beta-D-fructose 6-phosphate. It participates in carbohydrate degradation; pentose phosphate pathway; D-glyceraldehyde 3-phosphate and beta-D-fructose 6-phosphate from D-ribose 5-phosphate and D-xylulose 5-phosphate (non-oxidative stage): step 2/3. Transaldolase is important for the balance of metabolites in the pentose-phosphate pathway. In Pectobacterium atrosepticum (strain SCRI 1043 / ATCC BAA-672) (Erwinia carotovora subsp. atroseptica), this protein is Transaldolase 2.